A 211-amino-acid chain; its full sequence is Urease accessory protein UreG (211 aa).

A GTP-binding site is contributed by 11 to 18; it reads GPVGSGKT.

Belongs to the SIMIBI class G3E GTPase family. UreG subfamily. As to quaternary structure, homodimer. UreD, UreF and UreG form a complex that acts as a GTP-hydrolysis-dependent molecular chaperone, activating the urease apoprotein by helping to assemble the nickel containing metallocenter of UreC. The UreE protein probably delivers the nickel.

The protein localises to the cytoplasm. Facilitates the functional incorporation of the urease nickel metallocenter. This process requires GTP hydrolysis, probably effectuated by UreG. This is Urease accessory protein UreG from Laribacter hongkongensis (strain HLHK9).